Reading from the N-terminus, the 1287-residue chain is FYVE zinc finger domain protein UPA1 (1287 aa).

Residues 1–298 (MTIPDPANII…SSTSLSAPAE (298 aa)) are disordered. Over residues 86 to 99 (DSSSFGSKPSSSAS) the composition is skewed to low complexity. The span at 115-136 (WATSSTTSHPSKASQSTLSPNA) shows a compositional bias: polar residues. The PAM2 motif lies at 128–144 (SQSTLSPNASVFKPSRS). 2 stretches are compositionally biased toward basic and acidic residues: residues 177 to 187 (RPDHAPLDHEQ) and 201 to 211 (KVEEQRGDHSI). Polar residues predominate over residues 212 to 235 (PHQNGLVSAQAQTASDAVSTSKYT). Positions 239 to 253 (ADQEEDQDDFVYPGA) match the PAM2L 1 motif. The segment covering 255–294 (SPSSGQAAVQDEQQAVTDSQTTKSLTKQESDPEASSTSLS) has biased composition (polar residues). ANK repeat units follow at residues 366-395 (NGLVPLHFAAKDGKTDIVRWLITQAGAIVE), 400-429 (EGETALHKAAMAGKLSVASLLLSHGADANA), 433-463 (DGWTALHNACSRGYLDLVRLLVDRGHAQIDV), and 468-497 (GAWTPLMNAASKGHLPVVRHLTAKYHADPF). 4 disordered regions span residues 582 to 630 (NGGK…VGLP), 643 to 697 (RVGP…ASAQ), 934 to 960 (REAAGLDEDEDEDAADDDDDEFIYPNS), and 977 to 1005 (TSGTLSRPSLSQRQSSAASMLRNSVAPSE). The segment covering 674-695 (STPTPESVLQARRGTSSVNGAS) has biased composition (polar residues). The span at 938–955 (GLDEDEDEDAADDDDDEF) shows a compositional bias: acidic residues. Residues 941-960 (EDEDEDAADDDDDEFIYPNS) carry the PAM2L 2 motif. Residues 981–995 (LSRPSLSQRQSSAAS) show a composition bias toward low complexity. The FYVE-type zinc-finger motif lies at 1055 to 1129 (DEEAKDCIGC…VCNGCHAELQ (75 aa)). The Zn(2+) site is built by Cys1061, Cys1064, Cys1077, Cys1080, Cys1085, Cys1088, Cys1121, and Cys1124. An RING-type; atypical zinc finger spans residues 1243-1283 (CSICMEDFVANSTIARLPCLCYFHRGCIDSWFKRGRECPVH).

It belongs to the UPA1 PAM2 domain-binding protein family. As to quaternary structure, part of large ribonucleoprotein complexes (mRNPs) containing RNA-binding proteins RRM4 and PAB1, endosome-binding protein UPA1, core scaffold protein UPA2 and associated factor GRP1. Interacts (via PAM2 motif) with PAB1 (via PABC domain). Interacts (via PAM2L motifs) with RRM4.

It localises to the cytoplasm. The protein localises to the cytoskeleton. The protein resides in the endosome. FYVE zinc finger domain protein that functions in endosomal targeting and transport of mRNAs, as well as associated ribosomes. The endosomal mRNA transport regulates polarity of the infectious hyphae by transporting a broad spectrum of cargo mRNAs from the nucleus to cell poles. Involved in chitinase CTS1 secretion. Dispensable for general endosomal functions but crucial for endosomal recruitment of RRM4. The polypeptide is FYVE zinc finger domain protein UPA1 (Mycosarcoma maydis (Corn smut fungus)).